Consider the following 516-residue polypeptide: 2,3-bisphosphoglycerate-independent phosphoglycerate mutase (516 aa).

Asp-15 and Ser-65 together coordinate Mn(2+). Catalysis depends on Ser-65, which acts as the Phosphoserine intermediate. Substrate contacts are provided by residues His-126, 156-157 (RD), Arg-188, Arg-194, 263-266 (RADR), and Lys-336. The Mn(2+) site is built by Asp-403, His-407, Asp-444, His-445, and His-463.

It belongs to the BPG-independent phosphoglycerate mutase family. Monomer. It depends on Mn(2+) as a cofactor.

It carries out the reaction (2R)-2-phosphoglycerate = (2R)-3-phosphoglycerate. It functions in the pathway carbohydrate degradation; glycolysis; pyruvate from D-glyceraldehyde 3-phosphate: step 3/5. In terms of biological role, catalyzes the interconversion of 2-phosphoglycerate and 3-phosphoglycerate. The sequence is that of 2,3-bisphosphoglycerate-independent phosphoglycerate mutase from Francisella tularensis subsp. holarctica (strain OSU18).